The sequence spans 509 residues: MAERAALEELVKLQGERVRGLKQQKASAELIEEEVAKLLKLKAQLGPDESKQKFVLKTPKGTRDYSPRQMAVREKVFDVIIRCFKRHGAEVIDTPVFELKETLMGKYGEDSKLIYDLKDQGGELLSLRYDLTVPFARYLAMNKLTNIKRYHIAKVYRRDNPAMTRGRYREFYQCDFDIAGNFDPMIPDAECLKIMCEILSSLQIGDFLVKVNDRRILDGMFAICGVSDSKFRTICSSVDKLDKVSWEEVKNEMVGEKGLAPEVADRIGDYVQQHGGVSLVEQLLQDPKLSQNKQALEGLGDLKLLFEYLTLFGIDDKISFDLSLARGLDYYTGVIYEAVLLQTPAQAGEEPLGVGSVAAGGRYDGLVGMFDPKGRKVPCVGLSIGVERIFSIVEQRLEALEEKIRTTETQVLVASAQKKLLEERLKLVSELWDAGIKAELLYKKNPKLLNQLQYCEEAGIPLVAIIGEQELKDGVIKLRSVTSREEVDVRREDLVEEIKRRTGQPLCIC.

Ala2 bears the N-acetylalanine mark. Residues 3-59 enclose the WHEP-TRS domain; it reads ERAALEELVKLQGERVRGLKQQKASAELIEEEVAKLLKLKAQLGPDESKQKFVLKTP. Position 66 is a phosphoserine (Ser66). Residues 130–132, Arg157, Gln173, Asp177, Arg326, and 330–331 each bind L-histidine; these read DLT and YY. A Phosphoserine modification is found at Ser356.

The protein belongs to the class-II aminoacyl-tRNA synthetase family. Homodimer. As to expression, brain, heart, liver and kidney.

It is found in the cytoplasm. It carries out the reaction tRNA(His) + L-histidine + ATP = L-histidyl-tRNA(His) + AMP + diphosphate + H(+). Functionally, catalyzes the ATP-dependent ligation of histidine to the 3'-end of its cognate tRNA, via the formation of an aminoacyl-adenylate intermediate (His-AMP). Plays a role in axon guidance. This Homo sapiens (Human) protein is Histidine--tRNA ligase, cytoplasmic.